A 436-amino-acid polypeptide reads, in one-letter code: Ribosomal protein uS12 methylthiotransferase RimO (436 aa).

The 116-residue stretch at 2–117 (RNVGIISLGC…IVDVIEEVKK (116 aa)) folds into the MTTase N-terminal domain. 6 residues coordinate [4Fe-4S] cluster: cysteine 11, cysteine 47, cysteine 80, cysteine 154, cysteine 158, and cysteine 161. The Radical SAM core domain maps to 140–369 (TTPPYYAYLK…MEIQKQISYE (230 aa)). Residues 372-436 (MSKIGTKLEV…AFEYDLVGEY (65 aa)) form the TRAM domain.

This sequence belongs to the methylthiotransferase family. RimO subfamily. [4Fe-4S] cluster serves as cofactor.

It localises to the cytoplasm. It catalyses the reaction L-aspartate(89)-[ribosomal protein uS12]-hydrogen + (sulfur carrier)-SH + AH2 + 2 S-adenosyl-L-methionine = 3-methylsulfanyl-L-aspartate(89)-[ribosomal protein uS12]-hydrogen + (sulfur carrier)-H + 5'-deoxyadenosine + L-methionine + A + S-adenosyl-L-homocysteine + 2 H(+). Functionally, catalyzes the methylthiolation of an aspartic acid residue of ribosomal protein uS12. The polypeptide is Ribosomal protein uS12 methylthiotransferase RimO (Caldanaerobacter subterraneus subsp. tengcongensis (strain DSM 15242 / JCM 11007 / NBRC 100824 / MB4) (Thermoanaerobacter tengcongensis)).